Reading from the N-terminus, the 303-residue chain is Eukaryotic translation initiation factor 3 subunit F (303 aa).

Residues Met1–Ile10 are compositionally biased toward polar residues. The disordered stretch occupies residues Met1–Ser25. A compositionally biased stretch (low complexity) spans Leu12–Ser25. One can recognise an MPN domain in the interval Ile27–Gly165.

This sequence belongs to the eIF-3 subunit F family. In terms of assembly, component of the eukaryotic translation initiation factor 3 (eIF-3) complex.

The protein resides in the cytoplasm. In terms of biological role, component of the eukaryotic translation initiation factor 3 (eIF-3) complex, which is involved in protein synthesis of a specialized repertoire of mRNAs and, together with other initiation factors, stimulates binding of mRNA and methionyl-tRNAi to the 40S ribosome. The eIF-3 complex specifically targets and initiates translation of a subset of mRNAs involved in cell proliferation. The protein is Eukaryotic translation initiation factor 3 subunit F of Cryptococcus neoformans var. neoformans serotype D (strain B-3501A) (Filobasidiella neoformans).